Here is a 95-residue protein sequence, read N- to C-terminus: Aspartyl/glutamyl-tRNA(Asn/Gln) amidotransferase subunit C (95 aa).

A disordered region spans residues 74-95 (GQALEPAPDADNEHFLVPQVVE).

It belongs to the GatC family. As to quaternary structure, heterotrimer of A, B and C subunits.

It catalyses the reaction L-glutamyl-tRNA(Gln) + L-glutamine + ATP + H2O = L-glutaminyl-tRNA(Gln) + L-glutamate + ADP + phosphate + H(+). It carries out the reaction L-aspartyl-tRNA(Asn) + L-glutamine + ATP + H2O = L-asparaginyl-tRNA(Asn) + L-glutamate + ADP + phosphate + 2 H(+). Allows the formation of correctly charged Asn-tRNA(Asn) or Gln-tRNA(Gln) through the transamidation of misacylated Asp-tRNA(Asn) or Glu-tRNA(Gln) in organisms which lack either or both of asparaginyl-tRNA or glutaminyl-tRNA synthetases. The reaction takes place in the presence of glutamine and ATP through an activated phospho-Asp-tRNA(Asn) or phospho-Glu-tRNA(Gln). The protein is Aspartyl/glutamyl-tRNA(Asn/Gln) amidotransferase subunit C of Salinibacter ruber (strain DSM 13855 / M31).